Consider the following 106-residue polypeptide: Large ribosomal subunit protein P2A (106 aa).

Residue Lys2 forms a Glycyl lysine isopeptide (Lys-Gly) (interchain with G-Cter in ubiquitin) linkage. A Phosphothreonine modification is found at Thr16. Phosphoserine occurs at positions 40 and 43. Lys48 is covalently cross-linked (Glycyl lysine isopeptide (Lys-Gly) (interchain with G-Cter in ubiquitin)). Ser49 carries the phosphoserine modification. A compositionally biased stretch (low complexity) spans 65 to 82 (PAAGPASAGGAAAASGDA). The disordered stretch occupies residues 65–106 (PAAGPASAGGAAAASGDAAAEEEKEEEAAEESDDDMGFGLFD). The span at 83–100 (AAEEEKEEEAAEESDDDM) shows a compositional bias: acidic residues. Residue Ser96 is modified to Phosphoserine.

It belongs to the eukaryotic ribosomal protein P1/P2 family. Component of the large ribosomal subunit (LSU). Mature yeast ribosomes consist of a small (40S) and a large (60S) subunit. The 40S small subunit contains 1 molecule of ribosomal RNA (18S rRNA) and 33 different proteins (encoded by 57 genes). The large 60S subunit contains 3 rRNA molecules (25S, 5.8S and 5S rRNA) and 46 different proteins (encoded by 81 genes). The 5 acidic ribosomal P-proteins form the stalk structure of the 60S subunit. They are organized as a pentameric complex in which uL10/P0 interacts with 2 heterodimers, P1A-P2B and P1B-P2A. Post-translationally, phosphorylation is not involved in the interaction of the acidic P proteins with the ribosome, however it is suggested to affect the ribosome activity and to participate in a possible ribosome regulatory mechanism. The N-terminus is not modified.

It is found in the cytoplasm. In terms of biological role, component of the ribosome, a large ribonucleoprotein complex responsible for the synthesis of proteins in the cell. The small ribosomal subunit (SSU) binds messenger RNAs (mRNAs) and translates the encoded message by selecting cognate aminoacyl-transfer RNA (tRNA) molecules. The large subunit (LSU) contains the ribosomal catalytic site termed the peptidyl transferase center (PTC), which catalyzes the formation of peptide bonds, thereby polymerizing the amino acids delivered by tRNAs into a polypeptide chain. The nascent polypeptides leave the ribosome through a tunnel in the LSU and interact with protein factors that function in enzymatic processing, targeting, and the membrane insertion of nascent chains at the exit of the ribosomal tunnel. This Saccharomyces cerevisiae (strain ATCC 204508 / S288c) (Baker's yeast) protein is Large ribosomal subunit protein P2A.